The sequence spans 96 residues: Keratin-associated protein 12-3 (96 aa).

Repeat copies occupy residues 10–14 (CQPTC), 15–19 (CIHSP), 24–28 (CYVPV), 30–34 (CQSSV), 35–39 (CMPVS), 45–49 (CVAPS), 50–54 (CQPSV), 55–59 (CVPVS), 60–64 (CRPII), 70–74 (CQSSG), 75–79 (CCQPP), 80–84 (CTTAL), 85–89 (CRPIS), and 90–94 (CSTPS). Positions 10 to 94 (CQPTCCIHSP…CRPISCSTPS (85 aa)) are 14 X 5 AA approximate repeats.

Belongs to the KRTAP type 12 family. Interacts with hair keratins. Restricted to a narrow region of the hair fiber cuticle, lying approximately 20 cell layers above the apex of the dermal papilla of the hair root; not detected in any other tissues.

In terms of biological role, in the hair cortex, hair keratin intermediate filaments are embedded in an interfilamentous matrix, consisting of hair keratin-associated proteins (KRTAP), which are essential for the formation of a rigid and resistant hair shaft through their extensive disulfide bond cross-linking with abundant cysteine residues of hair keratins. The matrix proteins include the high-sulfur and high-glycine-tyrosine keratins. This is Keratin-associated protein 12-3 (KRTAP12-3) from Homo sapiens (Human).